A 337-amino-acid polypeptide reads, in one-letter code: tRNA N6-adenosine threonylcarbamoyltransferase (337 aa).

The Fe cation site is built by histidine 111 and histidine 115. Substrate-binding positions include 134–138 (LVSGG), aspartate 167, glycine 180, and asparagine 272. Aspartate 300 lines the Fe cation pocket.

The protein belongs to the KAE1 / TsaD family. Fe(2+) is required as a cofactor.

The protein resides in the cytoplasm. The enzyme catalyses L-threonylcarbamoyladenylate + adenosine(37) in tRNA = N(6)-L-threonylcarbamoyladenosine(37) in tRNA + AMP + H(+). In terms of biological role, required for the formation of a threonylcarbamoyl group on adenosine at position 37 (t(6)A37) in tRNAs that read codons beginning with adenine. Is involved in the transfer of the threonylcarbamoyl moiety of threonylcarbamoyl-AMP (TC-AMP) to the N6 group of A37, together with TsaE and TsaB. TsaD likely plays a direct catalytic role in this reaction. The polypeptide is tRNA N6-adenosine threonylcarbamoyltransferase (Nitrosomonas europaea (strain ATCC 19718 / CIP 103999 / KCTC 2705 / NBRC 14298)).